The chain runs to 157 residues: MKPLKGCPVAKDVRVAIVGSCFNSPIADRLVAGAQETFFDFGGDPSSLTIVRVPGAFEIPCAIKKLLSTSGQFHAVVACGVLIQGETSHYEHIADSVAAGVSRLSLDFCLPITFSVITAPNMEAAWERAGIKGPNLGASGMKTALEMASLFSLIGKE.

5-amino-6-(D-ribitylamino)uracil contacts are provided by residues phenylalanine 22, 56 to 58, and 81 to 83; these read AFE and VLI. 86–87 lines the (2S)-2-hydroxy-3-oxobutyl phosphate pocket; it reads ET. Histidine 89 serves as the catalytic Proton donor. Phenylalanine 114 is a 5-amino-6-(D-ribitylamino)uracil binding site. Position 128 (arginine 128) interacts with (2S)-2-hydroxy-3-oxobutyl phosphate.

Belongs to the DMRL synthase family.

The enzyme catalyses (2S)-2-hydroxy-3-oxobutyl phosphate + 5-amino-6-(D-ribitylamino)uracil = 6,7-dimethyl-8-(1-D-ribityl)lumazine + phosphate + 2 H2O + H(+). Its pathway is cofactor biosynthesis; riboflavin biosynthesis; riboflavin from 2-hydroxy-3-oxobutyl phosphate and 5-amino-6-(D-ribitylamino)uracil: step 1/2. In terms of biological role, catalyzes the formation of 6,7-dimethyl-8-ribityllumazine by condensation of 5-amino-6-(D-ribitylamino)uracil with 3,4-dihydroxy-2-butanone 4-phosphate. This is the penultimate step in the biosynthesis of riboflavin. The protein is 6,7-dimethyl-8-ribityllumazine synthase of Chlamydia trachomatis serovar L2 (strain ATCC VR-902B / DSM 19102 / 434/Bu).